Here is a 175-residue protein sequence, read N- to C-terminus: Mitochondrial inner membrane protease subunit 2 (175 aa).

Residues 19–37 traverse the membrane as a helical segment; that stretch reads FFVAVPVAVTFLDRVACVA. Residues Ser43 and Lys91 contribute to the active site.

It belongs to the peptidase S26 family. IMP2 subfamily. Heterodimer of 2 subunits, IMMPL1 and IMMPL2. As to expression, expressed in all tissues tested except adult liver and lung.

The protein resides in the mitochondrion inner membrane. In terms of biological role, catalyzes the removal of transit peptides required for the targeting of proteins from the mitochondrial matrix, across the inner membrane, into the inter-membrane space. Known to process the nuclear encoded protein DIABLO. The sequence is that of Mitochondrial inner membrane protease subunit 2 (IMMP2L) from Homo sapiens (Human).